The primary structure comprises 379 residues: Armadillo repeat-containing X-linked protein 3 (379 aa).

At Met1–Lys6 the chain is on the mitochondrial intermembrane side. Mitochondrion outer membrane (MOM)-targeting sequence regions lie at residues Met1 to Lys6 and Arg26 to Lys37. The helical; Signal-anchor transmembrane segment at Val7–Arg29 threads the bilayer. Residues Gly30–Glu379 are Cytoplasmic-facing. Residues Ser61, Ser67, and Ser72 each carry the phosphoserine modification. Residues Arg89 to Ala98 are nuclear localization signal. The segment covering Arg95 to Gln106 has biased composition (basic residues). Positions Arg95–Thr116 are disordered. Ser110 carries the post-translational modification Phosphoserine. ARM repeat units lie at residues Pro111–Ala151, Ala153–Val192, and Val233–Glu272.

The protein belongs to the eutherian X-chromosome-specific Armcx family. As to quaternary structure, interacts (via ARM domain) with MIRO1, MIRO2 and TRAK2. The interaction with Miro is calcium-dependent. Interacts with Sox10. In terms of tissue distribution, highly expressed in the developing neural tissues, neural crest derivatives and hind limbs. Also widely expressed in the adult nervous tissue, especially in the forebrain, including the cerebral cortex, hippocampus and thalamus.

The protein resides in the mitochondrion outer membrane. It localises to the cytoplasm. It is found in the nucleus. Its function is as follows. Regulates mitochondrial aggregation and transport in axons in living neurons. May link mitochondria to the Trak2-kinesin motor complex via its interaction with Miro and Trak2. Mitochondrial distribution and dynamics is regulated through Armcx3 protein degradation, which is promoted by PCK and negatively regulated by Wnt1. Enhances the Sox10-mediated transactivation of the neuronal acetylcholine receptor subunit alpha-3 and beta-4 subunit gene promoters. The chain is Armadillo repeat-containing X-linked protein 3 (Armcx3) from Mus musculus (Mouse).